A 367-amino-acid chain; its full sequence is uncharacterized protein (367 aa).

4 helical membrane-spanning segments follow: residues I18 to G38, V239 to G259, I296 to I316, and A329 to L349.

The protein belongs to the ABC-4 integral membrane protein family.

It localises to the cell membrane. This is an uncharacterized protein from Methanocaldococcus jannaschii (strain ATCC 43067 / DSM 2661 / JAL-1 / JCM 10045 / NBRC 100440) (Methanococcus jannaschii).